The following is an 825-amino-acid chain: Neuroligin-3 (825 aa).

Positions 1–34 (MWLQPSLSLSPTPTVGRSLCLTLGFLSLVLRAST) are cleaved as a signal peptide. Residues 35–686 (QAPAPTVNTH…NPRDYSTELS (652 aa)) are Extracellular-facing. N95 is a glycosylation site (N-linked (GlcNAc...) asparagine). C103 and C138 are disulfide-bonded. The disordered stretch occupies residues 151–172 (SGAKKQGEDLADNDGDEDEDIR). The span at 159 to 171 (DLADNDGDEDEDI) shows a compositional bias: acidic residues. Disulfide bonds link C317–C328 and C487–C521. An N-linked (GlcNAc...) asparagine glycan is attached at N522. Polar residues-rich tracts occupy residues 622 to 633 (TKVPPPDTTHSS) and 654 to 666 (AYSN…SWNG). The tract at residues 622 to 668 (TKVPPPDTTHSSHITRRPNGKTWSTKRPAISPAYSNENAPGSWNGDQ) is disordered. A helical membrane pass occupies residues 687 to 707 (VTIAVGASLLFLNVLAFAALY). The Cytoplasmic segment spans residues 708 to 825 (YRKDKRRQEP…LPHSHSTTRV (118 aa)). Position 722 is a phosphoserine (S722). Y769 bears the Phosphotyrosine mark.

This sequence belongs to the type-B carboxylesterase/lipase family. In terms of assembly, homodimer, and heterodimer with NLGN1 and NLGN2. Interacts with neurexins NRXN1, NRXN2 and NRXN3. Interaction with neurexins is mediated by heparan sulfate glycan modification on neurexin. Interacts (via its C-terminus) with DLG4/PSD-95 (via PDZ domain 3). In terms of tissue distribution, brain and arteries (at protein level). Detected in heart, brain, spleen, lung, liver, skeletal muscle, kidney and testis. Expressed in olfactory bulb and olfactory epithelium. Found in olfactory ensheathing glia but not in olfactory neurons, and in developing peripheral glia.

Its subcellular location is the cell membrane. It is found in the synapse. Functionally, cell surface protein involved in cell-cell-interactions via its interactions with neurexin family members. Plays a role in synapse function and synaptic signal transmission, and probably mediates its effects by recruiting and clustering other synaptic proteins. May promote the initial formation of synapses, but is not essential for this. May also play a role in glia-glia or glia-neuron interactions in the developing peripheral nervous system. This chain is Neuroligin-3 (Nlgn3), found in Mus musculus (Mouse).